A 558-amino-acid polypeptide reads, in one-letter code: Dihydroxy-acid dehydratase (558 aa).

Cys50 contacts [2Fe-2S] cluster. A Mg(2+)-binding site is contributed by Asp82. Position 123 (Cys123) interacts with [2Fe-2S] cluster. Mg(2+) contacts are provided by Asp124 and Lys125. Lys125 is modified (N6-carboxylysine). Cys195 is a [2Fe-2S] cluster binding site. Glu447 is a binding site for Mg(2+). The active-site Proton acceptor is the Ser472.

Belongs to the IlvD/Edd family. Homodimer. The cofactor is [2Fe-2S] cluster. Requires Mg(2+) as cofactor.

It catalyses the reaction (2R)-2,3-dihydroxy-3-methylbutanoate = 3-methyl-2-oxobutanoate + H2O. The catalysed reaction is (2R,3R)-2,3-dihydroxy-3-methylpentanoate = (S)-3-methyl-2-oxopentanoate + H2O. It functions in the pathway amino-acid biosynthesis; L-isoleucine biosynthesis; L-isoleucine from 2-oxobutanoate: step 3/4. The protein operates within amino-acid biosynthesis; L-valine biosynthesis; L-valine from pyruvate: step 3/4. Functionally, functions in the biosynthesis of branched-chain amino acids. Catalyzes the dehydration of (2R,3R)-2,3-dihydroxy-3-methylpentanoate (2,3-dihydroxy-3-methylvalerate) into 2-oxo-3-methylpentanoate (2-oxo-3-methylvalerate) and of (2R)-2,3-dihydroxy-3-methylbutanoate (2,3-dihydroxyisovalerate) into 2-oxo-3-methylbutanoate (2-oxoisovalerate), the penultimate precursor to L-isoleucine and L-valine, respectively. This Saccharolobus islandicus (strain Y.N.15.51 / Yellowstone #2) (Sulfolobus islandicus) protein is Dihydroxy-acid dehydratase.